We begin with the raw amino-acid sequence, 307 residues long: Pollen allergen KBG 60 (307 aa).

A signal peptide spans 1 to 22; the sequence is MAVQKYTVALFLVALVVGPAAS.

The protein belongs to the Poa p IX/Phl p VI allergen family. As to expression, pollen.

The polypeptide is Pollen allergen KBG 60 (Poa pratensis (Kentucky bluegrass)).